A 175-amino-acid polypeptide reads, in one-letter code: Large ribosomal subunit protein uL6 (175 aa).

This sequence belongs to the universal ribosomal protein uL6 family. Part of the 50S ribosomal subunit.

This protein binds to the 23S rRNA, and is important in its secondary structure. It is located near the subunit interface in the base of the L7/L12 stalk, and near the tRNA binding site of the peptidyltransferase center. In Xanthomonas campestris pv. campestris (strain 8004), this protein is Large ribosomal subunit protein uL6.